We begin with the raw amino-acid sequence, 334 residues long: Glyceraldehyde-3-phosphate dehydrogenase 2 (334 aa).

Residues 12–13 (RI), Asp-35, and Arg-79 contribute to the NAD(+) site. D-glyceraldehyde 3-phosphate is bound by residues 152 to 154 (SCT), Thr-183, Arg-198, 211 to 212 (SG), and Arg-234. Cys-153 functions as the Nucleophile in the catalytic mechanism. An NAD(+)-binding site is contributed by Asn-315.

It belongs to the glyceraldehyde-3-phosphate dehydrogenase family. In terms of assembly, homotetramer.

It localises to the cytoplasm. The enzyme catalyses D-glyceraldehyde 3-phosphate + phosphate + NAD(+) = (2R)-3-phospho-glyceroyl phosphate + NADH + H(+). The protein operates within carbohydrate degradation; glycolysis; pyruvate from D-glyceraldehyde 3-phosphate: step 1/5. Inhibited by pentalenolactone (PL). Catalyzes the oxidative phosphorylation of glyceraldehyde 3-phosphate (G3P) to 1,3-bisphosphoglycerate (BPG) using the cofactor NAD. The first reaction step involves the formation of a hemiacetal intermediate between G3P and a cysteine residue, and this hemiacetal intermediate is then oxidized to a thioester, with concomitant reduction of NAD to NADH. The reduced NADH is then exchanged with the second NAD, and the thioester is attacked by a nucleophilic inorganic phosphate to produce BPG. This is Glyceraldehyde-3-phosphate dehydrogenase 2 (gap2) from Streptomyces arenae.